A 1630-amino-acid polypeptide reads, in one-letter code: Patronin (1630 aa).

Positions 156–288 (QSYEQALLGW…LVVLLTDLFN (133 aa)) constitute a Calponin-homology (CH) domain. 2 disordered regions span residues 311–333 (NSFG…VQSN) and 355–446 (ASMH…DQLN). Positions 319–333 (RRSTPPNEYQTVQSN) are enriched in polar residues. Residue threonine 322 is modified to Phosphothreonine. Residues 358-394 (HSQQQQQLHQQQQHQQQYHQQPLQQHPSQSQLQIQQQ) are compositionally biased toward low complexity. The span at 404–419 (QAKEKTNVESKADERG) shows a compositional bias: basic and acidic residues. Residues serine 422, serine 431, serine 441, serine 460, serine 463, and serine 466 each carry the phosphoserine modification. Polar residues predominate over residues 432–446 (QLTIENFGGSQDQLN). A disordered region spans residues 486–589 (LQLGYDTDSG…SMPASPAAWQ (104 aa)). Residue threonine 492 is modified to Phosphothreonine. Residues serine 494, serine 496, serine 513, and serine 530 each carry the phosphoserine modification. Over residues 495 to 507 (GSEKQDRETEKYS) the composition is skewed to basic and acidic residues. The segment covering 513–529 (SVDNVPTVSSHNLSNAG) has biased composition (polar residues). Low complexity predominate over residues 576–587 (SSTSSMPASPAA). The stretch at 601-639 (ENASKLSTIRMKLEEKRRRIEQDKRKIEMALLRHQEKED) forms a coiled coil. 7 disordered regions span residues 726–753 (VSAY…PMPM), 872–967 (QQHQ…GMPM), 1005–1042 (DFVH…YDSG), 1055–1186 (NLTY…NKYT), 1200–1241 (GAMS…NAEA), 1284–1315 (EAKA…EEQM), and 1335–1459 (EREG…GVER). Composition is skewed to low complexity over residues 738 to 750 (PYQQ…QQQP) and 872 to 896 (QQHQ…SPGS). Residues 902–914 (NGGGGGGGGGGGE) are compositionally biased toward gly residues. Residues 919-947 (FQVQASPQHGQRQVSGSNGVQRQQSLTNL) show a composition bias toward polar residues. Composition is skewed to low complexity over residues 956–967 (PQNMGMPMGMPM) and 1008–1036 (HQQQ…GSSS). A phosphoserine mark is found at serine 1034, serine 1035, serine 1036, and serine 1067. Positions 1065–1074 (RPSIQANSFQ) are enriched in polar residues. A compositionally biased stretch (basic residues) spans 1105 to 1116 (RPKPPLRAKRSP). The segment covering 1167 to 1184 (GLNNSNSVKSPGNATYNK) has biased composition (polar residues). Over residues 1218-1230 (QSPQQTQQPMSPT) the composition is skewed to low complexity. 2 positions are modified to phosphoserine: serine 1219 and serine 1228. Positions 1277–1343 (QRRQQQEEAK…AEREGKTLDR (67 aa)) form a coiled coil. Residues 1335 to 1348 (EREGKTLDRPDLHV) show a composition bias toward basic and acidic residues. The segment covering 1363 to 1374 (RQQRTTRPRPKT) has biased composition (basic residues). Residues 1382–1400 (VDISEASSISSRGKKGSSS) are compositionally biased toward low complexity. A phosphoserine mark is found at serine 1398, serine 1399, and serine 1400. Polar residues predominate over residues 1401 to 1412 (NLTGYGQLSSNS). Residues 1450–1459 (TSREPAGVER) are compositionally biased toward basic and acidic residues. Residues 1489–1623 (GPKLYKQPAA…QGKRVQLPSK (135 aa)) enclose the CKK domain.

This sequence belongs to the CAMSAP1 family. Interacts with msps. Associates with the minus end of the microtubules.

It localises to the cytoplasm. The protein resides in the cytoskeleton. The protein localises to the microtubule organizing center. It is found in the spindle pole body. Its subcellular location is the centrosome. It localises to the perinuclear region. Its function is as follows. Key microtubule-organizing protein that specifically binds the minus-end of microtubules and regulates their dynamics and organization. Involved in mitotic spindle assembly. Regulates microtubule (MT) severing. Antagonizes the activity of the kinesin-13 depolymerase Klp10A thereby switching off the depolymerization of the MTs at their pole-associated minus ends, which turns off poleward flux and induces anaphase B spindle elongation. Involved in asymmetric cell division of sensory organ precursor (SOP) cells by playing a role in the asymmetric localization of Sara-expressing endosomes to the pIIa daughter cell but not to the pIIb cell. Klp98A targets Sara-expressing endosomes to the central spindle which is symmetrically arranged in early cell division. During late cytokinesis, central spindle asymmetry is generated by enrichment of Patronin on the pIIb side which protects microtubules from depolymerization by Klp10A while unprotected microtubules on the pIIa side are disassembled by Klp10A, leading to the asymmetric delivery of Sara-expressing endosomes to the pIIa daughter cell. In fat body cells, part of perinuclear non-centrosomal microtubule-organizing centers (ncMTOCs) which function to accommodate the organization of microtubule (MT) networks to control nuclear positioning and dynein motor-based retrograde endosomal trafficking. Within the ncMTOC, Msp300 and shot anchors the ncMTOC at the nuclear surface and recruits the MT minus-end regulators Patronin and Nin for assembly, anchoring and/or stabilization of circumferential and radial MTs at the ncMTOCs. This protein, and perhaps Nin, recruits msps to the ncMTOC for the gamma-tubulin-independent elongation of radial MTs. The polypeptide is Patronin (Patronin) (Drosophila melanogaster (Fruit fly)).